A 511-amino-acid polypeptide reads, in one-letter code: V-type proton ATPase subunit B, brain isoform (511 aa).

Position 400 (Arg-400) interacts with ATP.

This sequence belongs to the ATPase alpha/beta chains family. V-ATPase is a heteromultimeric enzyme made up of two complexes: the ATP-hydrolytic V1 complex and the proton translocation V0 complex. The V1 complex consists of three catalytic AB heterodimers that form a heterohexamer, three peripheral stalks each consisting of EG heterodimers, one central rotor including subunits D and F, and the regulatory subunits C and H. The proton translocation complex V0 consists of the proton transport subunit a, a ring of proteolipid subunits c9c'', rotary subunit d, subunits e and f, and the accessory subunits ATP6AP1/Ac45 and ATP6AP2/PRR.

It is found in the apical cell membrane. Its subcellular location is the melanosome. It localises to the cytoplasm. The protein localises to the cytoplasmic vesicle. The protein resides in the secretory vesicle. It is found in the synaptic vesicle membrane. Its subcellular location is the clathrin-coated vesicle membrane. Its function is as follows. Non-catalytic subunit of the V1 complex of vacuolar(H+)-ATPase (V-ATPase), a multisubunit enzyme composed of a peripheral complex (V1) that hydrolyzes ATP and a membrane integral complex (V0) that translocates protons. V-ATPase is responsible for acidifying and maintaining the pH of intracellular compartments and in some cell types, is targeted to the plasma membrane, where it is responsible for acidifying the extracellular environment. In renal intercalated cells, can partially compensate the lack of ATP6V1B1 and mediate secretion of protons (H+) into the urine under base-line conditions but not in conditions of acid load. The chain is V-type proton ATPase subunit B, brain isoform (ATP6V1B2) from Pongo abelii (Sumatran orangutan).